Here is a 20-residue protein sequence, read N- to C-terminus: Brevinin-1ITb (20 aa).

M8 carries the methionine sulfoxide; partial modification. A disulfide bridge connects residues C14 and C20.

The protein belongs to the frog skin active peptide (FSAP) family. Brevinin subfamily. Expressed by the skin glands.

Its subcellular location is the secreted. Antimicrobial peptide. This is Brevinin-1ITb from Rana italica (Italian stream frog).